A 230-amino-acid chain; its full sequence is MTKTTTCVYHFLVLNWYIFLNYHIPQIGRNEEKLREFHDGGRSKYLTLLNLLLQAIFFGVACLDDVLKRVIGRKDIKFVTSFRDLLFTTMAFPISTFVFLVFWTLFHYDRSLVYPKGLDDFFPAWVNHAMHTSIFPFSLFETILRPHNYPSKKLGLTLLGAFNFAYIIRILWRYVQTGNWVYPVFDSLSPLGIIIFFSAAYILVAGIYLFGEKINHWKWGAIAKPQMKKN.

Topologically, residues 1-7 (MTKTTTC) are cytoplasmic. Residues 8-28 (VYHFLVLNWYIFLNYHIPQIG) form a helical membrane-spanning segment. Topologically, residues 29–45 (RNEEKLREFHDGGRSKY) are extracellular. The helical transmembrane segment at 46–66 (LTLLNLLLQAIFFGVACLDDV) threads the bilayer. Residues 67–85 (LKRVIGRKDIKFVTSFRDL) are Cytoplasmic-facing. A helical transmembrane segment spans residues 86-106 (LFTTMAFPISTFVFLVFWTLF). At 107-120 (HYDRSLVYPKGLDD) the chain is on the extracellular side. A helical transmembrane segment spans residues 121 to 141 (FFPAWVNHAMHTSIFPFSLFE). Over 142–154 (TILRPHNYPSKKL) the chain is Cytoplasmic. A helical membrane pass occupies residues 155-175 (GLTLLGAFNFAYIIRILWRYV). At 176-190 (QTGNWVYPVFDSLSP) the chain is on the extracellular side. A helical transmembrane segment spans residues 191-211 (LGIIIFFSAAYILVAGIYLFG). At 212–230 (EKINHWKWGAIAKPQMKKN) the chain is on the cytoplasmic side.

It belongs to the AIG1 family.

It is found in the cell membrane. The catalysed reaction is 9-hexadecanoyloxy-octadecanoate + H2O = 9-hydroxy-octadecanoate + hexadecanoate + H(+). The enzyme catalyses 12-hexadecanoyloxy-octadecanoate + H2O = 12-hydroxyoctadecanoate + hexadecanoate + H(+). It catalyses the reaction 9-(9Z-hexadecenoyloxy)-octadecanoate + H2O = (9Z)-hexadecenoate + 9-hydroxy-octadecanoate + H(+). It carries out the reaction 12-(9Z-hexadecenoyloxy)-octadecanoate + H2O = 12-hydroxyoctadecanoate + (9Z)-hexadecenoate + H(+). The catalysed reaction is 13-(9Z-hexadecenoyloxy)-octadecanoate + H2O = 13-hydroxy-octadecanoate + (9Z)-hexadecenoate + H(+). The enzyme catalyses 9-octadecanoyloxy-octadecanoate + H2O = 9-hydroxy-octadecanoate + octadecanoate + H(+). It catalyses the reaction 12-octadecanoyloxy-octadecanoate + H2O = 12-hydroxyoctadecanoate + octadecanoate + H(+). It carries out the reaction 13-octadecanoyloxy-octadecanoate + H2O = 13-hydroxy-octadecanoate + octadecanoate + H(+). The catalysed reaction is 9-(9Z-octadecenoyloxy)-octadecanoate + H2O = 9-hydroxy-octadecanoate + (9Z)-octadecenoate + H(+). The enzyme catalyses 12-(9Z-octadecenoyloxy)-octadecanoate + H2O = 12-hydroxyoctadecanoate + (9Z)-octadecenoate + H(+). It catalyses the reaction 13-(9Z-octadecenoyloxy)-octadecanoate + H2O = 13-hydroxy-octadecanoate + (9Z)-octadecenoate + H(+). It carries out the reaction 5-(9Z-octadecenoyloxy)-octadecanoate + H2O = 5-hydroxy-octadecanoate + (9Z)-octadecenoate + H(+). Its function is as follows. Hydrolyzes bioactive fatty-acid esters of hydroxy-fatty acids (FAHFAs), but not other major classes of lipids. Shows a preference for FAHFAs with branching distal from the carboxylate head group of the lipids. Regulates the expression and the cell-associated anticoagulant activity of the inhibitor TFPI in endothelial cells (in vitro). The polypeptide is Androgen-dependent TFPI-regulating protein (Adtrp) (Mus musculus (Mouse)).